The chain runs to 493 residues: Keratin, type II cuticular Hb3 (493 aa).

Positions 1–111 (MTCGFNSIGC…PNAQCVKQEE (111 aa)) are head. The region spanning 111 to 422 (EKEQIKSLNS…RLLEGEEQRL (312 aa)) is the IF rod domain. The coil 1A stretch occupies residues 112–146 (KEQIKSLNSRFAAFIDKVRFLEQQNKLLETKLQFY). The segment at 147–156 (QNRECCQSNL) is linker 1. A coil 1B region spans residues 157-257 (EPLFAGYIET…YEEEIRILQS (101 aa)). Residue K217 forms a Glycyl lysine isopeptide (Lys-Gly) (interchain with G-Cter in SUMO1) linkage. Residues 258–274 (HISDTSVVVKLDNSRDL) form a linker 12 region. Positions 275 to 418 (NMDCIVAEIK…ATYRRLLEGE (144 aa)) are coil 2. The tail stretch occupies residues 419–493 (EQRLCEGVEA…GGGSCGQGRH (75 aa)).

This sequence belongs to the intermediate filament family. Heterotetramer of two type I and two type II keratins. Synthesis begins in the cortex 10-15 cell layers above the apex of the dermal papilla and ends abruptly in the middle of the cortex.

The polypeptide is Keratin, type II cuticular Hb3 (KRT83) (Homo sapiens (Human)).